We begin with the raw amino-acid sequence, 349 residues long: tRNA N6-adenosine threonylcarbamoyltransferase (349 aa).

Fe cation is bound by residues histidine 115 and histidine 119. Substrate-binding positions include 137–141, aspartate 170, glycine 183, and asparagine 281; that span reads LASGG. Aspartate 309 contributes to the Fe cation binding site.

The protein belongs to the KAE1 / TsaD family. Fe(2+) is required as a cofactor.

It localises to the cytoplasm. The catalysed reaction is L-threonylcarbamoyladenylate + adenosine(37) in tRNA = N(6)-L-threonylcarbamoyladenosine(37) in tRNA + AMP + H(+). Functionally, required for the formation of a threonylcarbamoyl group on adenosine at position 37 (t(6)A37) in tRNAs that read codons beginning with adenine. Is involved in the transfer of the threonylcarbamoyl moiety of threonylcarbamoyl-AMP (TC-AMP) to the N6 group of A37, together with TsaE and TsaB. TsaD likely plays a direct catalytic role in this reaction. The protein is tRNA N6-adenosine threonylcarbamoyltransferase of Methylobacterium nodulans (strain LMG 21967 / CNCM I-2342 / ORS 2060).